A 591-amino-acid polypeptide reads, in one-letter code: DEAD-box ATP-dependent RNA helicase 17 (591 aa).

A Q motif motif is present at residues 23-52; the sequence is CSFTDLGLHPTLCAHLQDKMGFQAPTRIQA. In terms of domain architecture, Helicase ATP-binding spans 55–248; sequence IPVAMSGQHM…KISLKNPVMI (194 aa). 68–75 is an ATP binding site; the sequence is AATGTGKT. The short motif at 181 to 184 is the DEAD box element; the sequence is DEAD. Residues 293–482 enclose the Helicase C-terminal domain; that stretch reads QLVQRYVKVS…SFPVNGQRLH (190 aa). A disordered region spans residues 562-591; the sequence is GRSHQVQLKKRKKEQKRERPAKRRKIPAKR. The span at 568 to 591 shows a compositional bias: basic residues; sequence QLKKRKKEQKRERPAKRRKIPAKR.

This sequence belongs to the DEAD box helicase family. DDX31/DBP7 subfamily. In terms of tissue distribution, expressed in flowers and pollen grains.

It is found in the nucleus. The catalysed reaction is ATP + H2O = ADP + phosphate + H(+). In terms of biological role, may play a role in organellar ribosome biogenesis and suppress 16S rRNA maturation. This Oryza sativa subsp. japonica (Rice) protein is DEAD-box ATP-dependent RNA helicase 17.